The following is a 161-amino-acid chain: Effector CFEM5 (161 aa).

Residues 1-23 (MFSLTKSVLFTSIVAIAAQATTA) form the signal peptide. The CFEM domain occupies 24 to 126 (VSSPTQTSLP…KVLDAVVASA (103 aa)). Disulfide bonds link Cys46/Cys78, Cys56/Cys63, and Cys65/Cys100. Asp60 provides a ligand contact to heme.

Belongs to the RBT5 family. Interacts with Z.mays LRR5; the interaction is direct. Interacts with Z.mays WAK17 isoform 2; the interaction is direct.

It localises to the membrane. Its subcellular location is the secreted. In terms of biological role, suppresses host programmed cell death during infection by binding to Z.mays WAK17 isoform 2 and Z.mays LRR5, to prevent activation of Z.mays WAK17 isoform 1 and the downstream hypersensitive response. This Gibberella zeae (strain ATCC MYA-4620 / CBS 123657 / FGSC 9075 / NRRL 31084 / PH-1) (Wheat head blight fungus) protein is Effector CFEM5.